Consider the following 211-residue polypeptide: Small ribosomal subunit protein uS3 (211 aa).

Positions 16 to 85 (IDEYFKTKLV…NPQIEVKQVE (70 aa)) constitute a KH type-2 domain.

Belongs to the universal ribosomal protein uS3 family. As to quaternary structure, part of the 30S ribosomal subunit.

Its function is as follows. Binds the lower part of the 30S subunit head. This Methanococcus maripaludis (strain C5 / ATCC BAA-1333) protein is Small ribosomal subunit protein uS3.